Consider the following 164-residue polypeptide: Endoribonuclease YbeY (164 aa).

Zn(2+) contacts are provided by H111, H115, and H121. A disordered region spans residues 140–164; that stretch reads ELGHPDPYADDDAQKHSTVTIKDSE. Polar residues predominate over residues 155 to 164; the sequence is HSTVTIKDSE.

The protein belongs to the endoribonuclease YbeY family. Zn(2+) serves as cofactor.

The protein localises to the cytoplasm. Its function is as follows. Single strand-specific metallo-endoribonuclease involved in late-stage 70S ribosome quality control and in maturation of the 3' terminus of the 16S rRNA. The protein is Endoribonuclease YbeY of Pseudomonas fluorescens (strain SBW25).